We begin with the raw amino-acid sequence, 278 residues long: 4-deoxy-L-threo-5-hexosulose-uronate ketol-isomerase (278 aa).

His196, His198, Glu203, and His245 together coordinate Zn(2+).

It belongs to the KduI family. As to quaternary structure, homohexamer. Zn(2+) is required as a cofactor.

The catalysed reaction is 5-dehydro-4-deoxy-D-glucuronate = 3-deoxy-D-glycero-2,5-hexodiulosonate. The protein operates within glycan metabolism; pectin degradation; 2-dehydro-3-deoxy-D-gluconate from pectin: step 4/5. In terms of biological role, catalyzes the isomerization of 5-dehydro-4-deoxy-D-glucuronate to 3-deoxy-D-glycero-2,5-hexodiulosonate. The polypeptide is 4-deoxy-L-threo-5-hexosulose-uronate ketol-isomerase (Escherichia coli (strain 55989 / EAEC)).